We begin with the raw amino-acid sequence, 920 residues long: Isoleucine--tRNA ligase (920 aa).

The 'HIGH' region motif lies at 58-68 (PYANGHLHLGH). Glu-569 serves as a coordination point for L-isoleucyl-5'-AMP. Positions 610 to 614 (KMSKS) match the 'KMSKS' region motif. Lys-613 serves as a coordination point for ATP. Zn(2+) is bound by residues Cys-895, Cys-898, Cys-910, and Cys-913.

The protein belongs to the class-I aminoacyl-tRNA synthetase family. IleS type 1 subfamily. As to quaternary structure, monomer. It depends on Zn(2+) as a cofactor.

It is found in the cytoplasm. The catalysed reaction is tRNA(Ile) + L-isoleucine + ATP = L-isoleucyl-tRNA(Ile) + AMP + diphosphate. Catalyzes the attachment of isoleucine to tRNA(Ile). As IleRS can inadvertently accommodate and process structurally similar amino acids such as valine, to avoid such errors it has two additional distinct tRNA(Ile)-dependent editing activities. One activity is designated as 'pretransfer' editing and involves the hydrolysis of activated Val-AMP. The other activity is designated 'posttransfer' editing and involves deacylation of mischarged Val-tRNA(Ile). The sequence is that of Isoleucine--tRNA ligase from Helicobacter pylori (strain G27).